The following is a 501-amino-acid chain: Oxygen-independent coproporphyrinogen-III oxidase-like protein HemZ (501 aa).

A Radical SAM core domain is found at 163 to 405 (DLYRVKDEVS…VAWTKEHGYV (243 aa)). Residue Tyr174 coordinates S-adenosyl-L-methionine. [4Fe-4S] cluster contacts are provided by Cys180 and Cys184. S-adenosyl-L-methionine is bound at residue Tyr186. Cys187 provides a ligand contact to [4Fe-4S] cluster. S-adenosyl-L-methionine contacts are provided by residues Gly233, 234–235 (GT), Glu267, Gln295, Arg307, and Asp332.

The protein belongs to the anaerobic coproporphyrinogen-III oxidase family. HemZ subfamily. The cofactor is [4Fe-4S] cluster.

The protein operates within porphyrin-containing compound metabolism; protoporphyrin-IX biosynthesis. Functionally, involved in the biosynthesis of porphyrin-containing compound. This chain is Oxygen-independent coproporphyrinogen-III oxidase-like protein HemZ (hemZ), found in Bacillus subtilis (strain 168).